Consider the following 152-residue polypeptide: Transcriptional regulator MraZ (152 aa).

SpoVT-AbrB domains are found at residues 5–52 (ATTL…PLPE) and 81–124 (ADDC…NEDA).

It belongs to the MraZ family. In terms of assembly, forms oligomers.

It is found in the cytoplasm. The protein resides in the nucleoid. In Idiomarina loihiensis (strain ATCC BAA-735 / DSM 15497 / L2-TR), this protein is Transcriptional regulator MraZ.